A 314-amino-acid polypeptide reads, in one-letter code: Homoserine kinase (314 aa).

95-105 contacts ATP; that stretch reads PHSRGLGSSAS.

It belongs to the GHMP kinase family. Homoserine kinase subfamily.

Its subcellular location is the cytoplasm. The enzyme catalyses L-homoserine + ATP = O-phospho-L-homoserine + ADP + H(+). The protein operates within amino-acid biosynthesis; L-threonine biosynthesis; L-threonine from L-aspartate: step 4/5. Catalyzes the ATP-dependent phosphorylation of L-homoserine to L-homoserine phosphate. This is Homoserine kinase from Rhodococcus opacus (strain B4).